The chain runs to 500 residues: Glycerol kinase (500 aa).

Thr-11 contacts ADP. Residues Thr-11, Thr-12, and Ser-13 each coordinate ATP. Thr-11 provides a ligand contact to sn-glycerol 3-phosphate. Arg-15 is a binding site for ADP. Sn-glycerol 3-phosphate contacts are provided by Arg-81, Glu-82, Tyr-133, and Asp-242. The glycerol site is built by Arg-81, Glu-82, Tyr-133, Asp-242, and Gln-243. ADP-binding residues include Thr-264 and Gly-307. Residues Thr-264, Gly-307, Gln-311, and Gly-411 each coordinate ATP. Gly-411 serves as a coordination point for ADP.

Belongs to the FGGY kinase family.

The enzyme catalyses glycerol + ATP = sn-glycerol 3-phosphate + ADP + H(+). It functions in the pathway polyol metabolism; glycerol degradation via glycerol kinase pathway; sn-glycerol 3-phosphate from glycerol: step 1/1. With respect to regulation, inhibited by fructose 1,6-bisphosphate (FBP). In terms of biological role, key enzyme in the regulation of glycerol uptake and metabolism. Catalyzes the phosphorylation of glycerol to yield sn-glycerol 3-phosphate. This Bradyrhizobium sp. (strain BTAi1 / ATCC BAA-1182) protein is Glycerol kinase.